We begin with the raw amino-acid sequence, 185 residues long: Ribosome-recycling factor (185 aa).

The protein belongs to the RRF family.

Its subcellular location is the cytoplasm. Its function is as follows. Responsible for the release of ribosomes from messenger RNA at the termination of protein biosynthesis. May increase the efficiency of translation by recycling ribosomes from one round of translation to another. This is Ribosome-recycling factor from Edwardsiella ictaluri (strain 93-146).